Reading from the N-terminus, the 138-residue chain is Large ribosomal subunit protein uL16 (138 aa).

Positions 1-13 (MLQPKRRKYRKEQ) are enriched in basic residues. A disordered region spans residues 1 to 20 (MLQPKRRKYRKEQKGRNTGI).

It belongs to the universal ribosomal protein uL16 family. In terms of assembly, part of the 50S ribosomal subunit.

Its function is as follows. Binds 23S rRNA and is also seen to make contacts with the A and possibly P site tRNAs. This is Large ribosomal subunit protein uL16 from Ralstonia nicotianae (strain ATCC BAA-1114 / GMI1000) (Ralstonia solanacearum).